The following is an 809-amino-acid chain: DNA replication helicase (809 aa).

72-79 (GTAGAGKS) contributes to the ATP binding site.

Belongs to the herpesviridae helicase family. Associates with the primase and the primase-associated factor to form the helicase-primase complex.

It is found in the host nucleus. In terms of biological role, component of the helicase/primase complex. Unwinds the DNA at the replication forks and generates single-stranded DNA for both leading and lagging strand synthesis. The primase synthesizes short RNA primers on the lagging strand that the polymerase elongates using dNTPs. Possesses helicase-like motifs and therefore may act as the helicase subunit of the complex. This is DNA replication helicase from Epstein-Barr virus (strain B95-8) (HHV-4).